A 144-amino-acid polypeptide reads, in one-letter code: Monobin (144 aa).

The N-terminal stretch at 1 to 16 is a signal peptide; that stretch reads MRLLALFAFAVAVVSA. A Pyrrolidone carboxylic acid modification is found at glutamine 17. Residues 18–73 enclose the BPTI/Kunitz inhibitor 1 domain; the sequence is RNQMCQQPRTQGSCDASNQITKFFYTGSGCTSAPVCSDTDGGYGTEDECIQACTVQ. 3 disulfides stabilise this stretch: cysteine 22–cysteine 70, cysteine 31–cysteine 53, and cysteine 47–cysteine 66. Residues 74–85 are linker; it reads GGHHNEGAGEEG. Residues 86-139 enclose the BPTI/Kunitz inhibitor domain; it reads CSGDPPRGDCGGQVEERYYFDSTTRTCQTFEYRGCSSGNPDNSYETEIECEIAC. 3 disulfides stabilise this stretch: cysteine 86–cysteine 139, cysteine 95–cysteine 120, and cysteine 112–cysteine 135. Residues 92-94 carry the Cell attachment site motif; sequence RGD.

The N-terminus is blocked. As to expression, expressed in salivary glands.

The protein resides in the cytoplasmic vesicle. It is found in the secretory vesicle. It localises to the secreted. Its function is as follows. Tick salivary thrombin inhibitor that plays an important part in the anti-hemostatic strategy of ticks. This is Monobin from Argas monolakensis (Mono lake bird tick).